The chain runs to 334 residues: Probable tRNA pseudouridine synthase B (334 aa).

The active-site Nucleophile is Asp82. One can recognise a PUA domain in the interval 250-325 (LPKVWIRDSA…IAVDVDKVFM (76 aa)).

This sequence belongs to the pseudouridine synthase TruB family. Type 2 subfamily.

The enzyme catalyses uridine(55) in tRNA = pseudouridine(55) in tRNA. Functionally, could be responsible for synthesis of pseudouridine from uracil-55 in the psi GC loop of transfer RNAs. This Thermococcus onnurineus (strain NA1) protein is Probable tRNA pseudouridine synthase B.